The following is a 197-amino-acid chain: Nucleoside triphosphate pyrophosphatase (197 aa).

The active-site Proton acceptor is the aspartate 71.

This sequence belongs to the Maf family. A divalent metal cation serves as cofactor.

Its subcellular location is the cytoplasm. It catalyses the reaction a ribonucleoside 5'-triphosphate + H2O = a ribonucleoside 5'-phosphate + diphosphate + H(+). It carries out the reaction a 2'-deoxyribonucleoside 5'-triphosphate + H2O = a 2'-deoxyribonucleoside 5'-phosphate + diphosphate + H(+). In terms of biological role, nucleoside triphosphate pyrophosphatase. May have a dual role in cell division arrest and in preventing the incorporation of modified nucleotides into cellular nucleic acids. The sequence is that of Nucleoside triphosphate pyrophosphatase from Trichormus variabilis (strain ATCC 29413 / PCC 7937) (Anabaena variabilis).